The chain runs to 328 residues: UPF0285 protein MJ1370 (328 aa).

The protein belongs to the UPF0285 family.

In Methanocaldococcus jannaschii (strain ATCC 43067 / DSM 2661 / JAL-1 / JCM 10045 / NBRC 100440) (Methanococcus jannaschii), this protein is UPF0285 protein MJ1370.